We begin with the raw amino-acid sequence, 32 residues long: MSDIN-like toxin proprotein 1 (32 aa).

Positions 1-10 are excised as a propeptide; sequence MSDINVTRLP. The segment at residues 11–18 is a cross-link (cyclopeptide (Gly-Pro)); that stretch reads GFVPILFP. A propeptide spanning residues 19–32 is cleaved from the precursor; the sequence is CVGDDVNTALTRGE.

This sequence belongs to the MSDIN fungal toxin family. Processed by the macrocyclase-peptidase enzyme POPB to yield a toxic cyclic octapeptide. POPB first removes 10 residues from the N-terminus. Conformational trapping of the remaining peptide forces the enzyme to release this intermediate rather than proceed to macrocyclization. The enzyme rebinds the remaining peptide in a different conformation and catalyzes macrocyclization of the N-terminal 8 residues.

Probable toxin that belongs to the MSDIN-like toxin family responsible for a large number of food poisoning cases and deaths. This Amanita bisporigera (Destroying angel) protein is MSDIN-like toxin proprotein 1.